Reading from the N-terminus, the 152-residue chain is UPF0178 protein SAR0734 (152 aa).

It belongs to the UPF0178 family.

This chain is UPF0178 protein SAR0734, found in Staphylococcus aureus (strain MRSA252).